We begin with the raw amino-acid sequence, 432 residues long: Serine hydroxymethyltransferase (432 aa).

(6S)-5,6,7,8-tetrahydrofolate contacts are provided by residues leucine 131 and 135–137 (GHL). Position 240 is an N6-(pyridoxal phosphate)lysine (lysine 240).

Belongs to the SHMT family. Homodimer. Requires pyridoxal 5'-phosphate as cofactor.

It localises to the cytoplasm. It carries out the reaction (6R)-5,10-methylene-5,6,7,8-tetrahydrofolate + glycine + H2O = (6S)-5,6,7,8-tetrahydrofolate + L-serine. It participates in one-carbon metabolism; tetrahydrofolate interconversion. Its pathway is amino-acid biosynthesis; glycine biosynthesis; glycine from L-serine: step 1/1. Its function is as follows. Catalyzes the reversible interconversion of serine and glycine with tetrahydrofolate (THF) serving as the one-carbon carrier. This reaction serves as the major source of one-carbon groups required for the biosynthesis of purines, thymidylate, methionine, and other important biomolecules. Also exhibits THF-independent aldolase activity toward beta-hydroxyamino acids, producing glycine and aldehydes, via a retro-aldol mechanism. This is Serine hydroxymethyltransferase from Acidiphilium cryptum (strain JF-5).